Reading from the N-terminus, the 546-residue chain is Chaperonin GroEL 3 (546 aa).

Residues 30–33 (TLGP), Lys-51, 87–91 (DGTTT), Gly-415, and Asp-496 each bind ATP.

The protein belongs to the chaperonin (HSP60) family. In terms of assembly, forms a cylinder of 14 subunits composed of two heptameric rings stacked back-to-back. Interacts with the co-chaperonin GroES.

The protein localises to the cytoplasm. The enzyme catalyses ATP + H2O + a folded polypeptide = ADP + phosphate + an unfolded polypeptide.. Functionally, together with its co-chaperonin GroES, plays an essential role in assisting protein folding. The GroEL-GroES system forms a nano-cage that allows encapsulation of the non-native substrate proteins and provides a physical environment optimized to promote and accelerate protein folding. This Bradyrhizobium diazoefficiens (strain JCM 10833 / BCRC 13528 / IAM 13628 / NBRC 14792 / USDA 110) protein is Chaperonin GroEL 3.